The primary structure comprises 215 residues: UPF0502 protein YceH (215 aa).

It belongs to the UPF0502 family.

The sequence is that of UPF0502 protein YceH from Salmonella paratyphi B (strain ATCC BAA-1250 / SPB7).